The sequence spans 585 residues: Arginine--tRNA ligase (585 aa).

The 'HIGH' region signature appears at 127-137; that stretch reads PNTNKPLHVGH.

The protein belongs to the class-I aminoacyl-tRNA synthetase family. Monomer.

The protein localises to the cytoplasm. It carries out the reaction tRNA(Arg) + L-arginine + ATP = L-arginyl-tRNA(Arg) + AMP + diphosphate. The chain is Arginine--tRNA ligase from Borreliella afzelii (strain PKo) (Borrelia afzelii).